Reading from the N-terminus, the 315-residue chain is Protein-methionine-sulfoxide reductase catalytic subunit MsrP (315 aa).

A signal peptide (tat-type signal) is located at residues 1–45 (MPSYRPPKIASSEITPRQVYLRRREFLGAATLGAMALYGAGKASA). Mo-molybdopterin-binding positions include Asn-71, 74–75 (YE), Cys-129, Thr-164, Asn-214, Arg-219, and 230–232 (GIK).

This sequence belongs to the MsrP family. In terms of assembly, heterodimer of a catalytic subunit (MsrP) and a heme-binding subunit (MsrQ). Mo-molybdopterin serves as cofactor. Post-translationally, predicted to be exported by the Tat system. The position of the signal peptide cleavage has not been experimentally proven.

The protein localises to the periplasm. It catalyses the reaction L-methionyl-[protein] + a quinone + H2O = L-methionyl-(S)-S-oxide-[protein] + a quinol. The enzyme catalyses L-methionyl-[protein] + a quinone + H2O = L-methionyl-(R)-S-oxide-[protein] + a quinol. Its function is as follows. Part of the MsrPQ system that repairs oxidized periplasmic proteins containing methionine sulfoxide residues (Met-O), using respiratory chain electrons. Thus protects these proteins from oxidative-stress damage caused by reactive species of oxygen and chlorine generated by the host defense mechanisms. MsrPQ is essential for the maintenance of envelope integrity under bleach stress, rescuing a wide series of structurally unrelated periplasmic proteins from methionine oxidation. The catalytic subunit MsrP is non-stereospecific, being able to reduce both (R-) and (S-) diastereoisomers of methionine sulfoxide. The sequence is that of Protein-methionine-sulfoxide reductase catalytic subunit MsrP from Rhizobium etli (strain ATCC 51251 / DSM 11541 / JCM 21823 / NBRC 15573 / CFN 42).